The following is a 138-amino-acid chain: Actophorin (138 aa).

The region spanning glycine 3–lysine 134 is the ADF-H domain.

This sequence belongs to the actin-binding proteins ADF family. Interacts with F-actin. Does not interact with G-actin. Interacts with 14-3-3 protein 3.

The protein resides in the cytoplasm. It is found in the cytoskeleton. The protein localises to the cell membrane. Its subcellular location is the cell projection. It localises to the phagocytic cup. The protein resides in the pseudopodium. Its function is as follows. Actin-binding protein that severs actin filaments. In Entamoeba histolytica (strain ATCC 30459 / HM-1:IMSS / ABRM), this protein is Actophorin.